Consider the following 280-residue polypeptide: Large ribosomal subunit protein uL2 (280 aa).

Disordered regions lie at residues 32–54 (SLLVPNKSTGGRNNNGRVTSRHM) and 221–280 (RGMA…DSKK). A compositionally biased stretch (polar residues) spans 37-49 (NKSTGGRNNNGRV). The span at 232–242 (MGGGEGKSKSG) shows a compositional bias: gly residues. Residues 257 to 280 (KGLKTRKRKKASSKLIVRRRDSKK) are compositionally biased toward basic residues.

Belongs to the universal ribosomal protein uL2 family. In terms of assembly, part of the 50S ribosomal subunit. Forms a bridge to the 30S subunit in the 70S ribosome.

Its function is as follows. One of the primary rRNA binding proteins. Required for association of the 30S and 50S subunits to form the 70S ribosome, for tRNA binding and peptide bond formation. It has been suggested to have peptidyltransferase activity; this is somewhat controversial. Makes several contacts with the 16S rRNA in the 70S ribosome. The chain is Large ribosomal subunit protein uL2 from Chloroherpeton thalassium (strain ATCC 35110 / GB-78).